A 309-amino-acid chain; its full sequence is Lactamase-like protein aptB (309 aa).

Zn(2+) contacts are provided by histidine 97, histidine 99, aspartate 101, and histidine 102. The active-site Proton donor/acceptor is aspartate 101.

The protein belongs to the metallo-beta-lactamase superfamily. Zn(2+) serves as cofactor.

The enzyme catalyses 2,3,6,8,9-pentahydroxy-1-oxo-3-(2-oxopropyl)-1,2,3,4-tetrahydroanthracene-2-carboxyl-[ACP] + H2O = 2,3,6,8,9-pentahydroxy-1-oxo-3-(2-oxopropyl)-1,2,3,4-tetrahydroanthracene-2-carboxylate + holo-[ACP] + H(+). Its pathway is secondary metabolite biosynthesis. Lactamase-like protein; part of the gene cluster that mediates the biosynthesis of asperthecin, an anthraquinone pigment. Polyketide synthase (PKS) aptA catalyzes the formation of the aromatic polyketide from acetyl coenzyme A and seven malonyl coenzyme A molecules. Polyketide is subsequently hydrolyzed by the action of aptB into endocrocin-9-anthrone. Endocrocin-9-anthrone is then oxidized into endocrocin by aptC. Endocrocin is likely to decarboxylate spontaneously to form emodin which explains why there is no decarboxylase in the asperthecin biosynthesis cluster. Finally, aptC or another endogenous oxygenase catalyzes additional oxidation steps to form asperthecin. The chain is Lactamase-like protein aptB from Emericella nidulans (strain FGSC A4 / ATCC 38163 / CBS 112.46 / NRRL 194 / M139) (Aspergillus nidulans).